The following is a 475-amino-acid chain: Ribulose bisphosphate carboxylase large chain (475 aa).

Positions 1 to 2 (MS) are excised as a propeptide. At proline 3 the chain carries N-acetylproline. The residue at position 14 (lysine 14) is an N6,N6,N6-trimethyllysine. Residues asparagine 123 and threonine 173 each coordinate substrate. Catalysis depends on lysine 175, which acts as the Proton acceptor. Position 177 (lysine 177) interacts with substrate. Mg(2+) is bound by residues lysine 201, aspartate 203, and glutamate 204. Residue lysine 201 is modified to N6-carboxylysine. Catalysis depends on histidine 294, which acts as the Proton acceptor. Positions 295, 327, and 379 each coordinate substrate.

The protein belongs to the RuBisCO large chain family. Type I subfamily. Heterohexadecamer of 8 large chains and 8 small chains; disulfide-linked. The disulfide link is formed within the large subunit homodimers. The cofactor is Mg(2+). The disulfide bond which can form in the large chain dimeric partners within the hexadecamer appears to be associated with oxidative stress and protein turnover.

The protein resides in the plastid. The protein localises to the chloroplast. The enzyme catalyses 2 (2R)-3-phosphoglycerate + 2 H(+) = D-ribulose 1,5-bisphosphate + CO2 + H2O. It catalyses the reaction D-ribulose 1,5-bisphosphate + O2 = 2-phosphoglycolate + (2R)-3-phosphoglycerate + 2 H(+). Its function is as follows. RuBisCO catalyzes two reactions: the carboxylation of D-ribulose 1,5-bisphosphate, the primary event in carbon dioxide fixation, as well as the oxidative fragmentation of the pentose substrate in the photorespiration process. Both reactions occur simultaneously and in competition at the same active site. In Keteleeria davidiana (David's keteleeria), this protein is Ribulose bisphosphate carboxylase large chain.